The primary structure comprises 92 residues: Small ribosomal subunit protein bS18c (92 aa).

It belongs to the bacterial ribosomal protein bS18 family. In terms of assembly, part of the 30S ribosomal subunit.

The protein localises to the plastid. The chain is Small ribosomal subunit protein bS18c (rps18) from Epifagus virginiana (Beechdrops).